Consider the following 415-residue polypeptide: SVF1-like protein YDR222W (415 aa).

It belongs to the SVF1 family.

It localises to the cytoplasm. In Saccharomyces cerevisiae (strain ATCC 204508 / S288c) (Baker's yeast), this protein is SVF1-like protein YDR222W.